The primary structure comprises 308 residues: Ribosomal protein L11 methyltransferase (308 aa).

Residues Thr148, Gly169, Asp191, and Asn239 each contribute to the S-adenosyl-L-methionine site.

This sequence belongs to the methyltransferase superfamily. PrmA family.

Its subcellular location is the cytoplasm. The catalysed reaction is L-lysyl-[protein] + 3 S-adenosyl-L-methionine = N(6),N(6),N(6)-trimethyl-L-lysyl-[protein] + 3 S-adenosyl-L-homocysteine + 3 H(+). Functionally, methylates ribosomal protein L11. In Psychrobacter arcticus (strain DSM 17307 / VKM B-2377 / 273-4), this protein is Ribosomal protein L11 methyltransferase.